Reading from the N-terminus, the 345-residue chain is Ribosomal RNA small subunit methyltransferase C (345 aa).

This sequence belongs to the methyltransferase superfamily. RsmC family. Monomer.

It localises to the cytoplasm. It catalyses the reaction guanosine(1207) in 16S rRNA + S-adenosyl-L-methionine = N(2)-methylguanosine(1207) in 16S rRNA + S-adenosyl-L-homocysteine + H(+). Its function is as follows. Specifically methylates the guanine in position 1207 of 16S rRNA in the 30S particle. This is Ribosomal RNA small subunit methyltransferase C from Shewanella denitrificans (strain OS217 / ATCC BAA-1090 / DSM 15013).